A 1553-amino-acid polypeptide reads, in one-letter code: Sodium channel protein PaFPC1 (1553 aa).

Positions 1–68 (MADNSPLIRE…SAHPDQALEQ (68 aa)) are disordered. Topologically, residues 1–140 (MADNSPLIRE…RVAISTMVQP (140 aa)) are cytoplasmic. A compositionally biased stretch (basic and acidic residues) spans 34-60 (ENGKTEENKDNSRDKGRGANKDRDGSA). A helical transmembrane segment spans residues 141–159 (IFSYFIMITILIHCIFMIM). The Extracellular portion of the chain corresponds to 160–165 (PATQTT). Residues 166-186 (YILELVFLSIYTIEVVVKVLA) form a helical membrane-spanning segment. The Cytoplasmic portion of the chain corresponds to 187 to 200 (RGFILHPFAYLRDP). Residues 201–218 (WNWLDFLVTLIGYITLVV) form a helical membrane-spanning segment. Over 219–224 (DLGHLY) the chain is Extracellular. Residues 225–241 (ALRAFRVLRSWRTVTIV) traverse the membrane as a helical segment. At 242-260 (PGWRTIVDALSLSITSLKD) the chain is on the cytoplasmic side. A helical membrane pass occupies residues 261-280 (LVLLLLFSLFVFAVLGLQIY). Topologically, residues 281–360 (MGVLTQKCVK…PNYGYTSFDT (80 aa)) are extracellular. 2 disulfides stabilise this stretch: Cys-288-Cys-337 and Cys-328-Cys-343. Residues Asn-300, Asn-308, Asn-312, and Asn-330 are each glycosylated (N-linked (GlcNAc...) asparagine). Positions 361-385 (FGWAFLSVFRLVTLDYWEDLYQLAL) form an intramembrane region, pore-forming. Glu-378 serves as a coordination point for saxitoxin. Over 386–392 (RSAGPWH) the chain is Extracellular. Residues 393–413 (ILFFIIVVFYGTFCFLNFILA) traverse the membrane as a helical segment. At 414–519 (VVVMSYTHMV…GAIGAVVLSP (106 aa)) the chain is on the cytoplasmic side. Residues 520–538 (FFELFIAVIIVLNITFMAL) form a helical membrane-spanning segment. Topologically, residues 539 to 549 (DHHDMNIEFER) are extracellular. A helical transmembrane segment spans residues 550-569 (ILRTGNYIFTSIYIVEAVLK). The Cytoplasmic segment spans residues 570-583 (IIALSPKFYFKDSW). The helical transmembrane segment at 584 to 603 (NVFDFIIVVFAILELGLEGV) threads the bilayer. The Extracellular segment spans residues 604–605 (QG). Residues 606–623 (LSVFRSFRLLRVFRLAKF) traverse the membrane as a helical segment. Over 624–639 (WPTLNNFMSVMTKSYG) the chain is Cytoplasmic. The helical transmembrane segment at 640-658 (AFVNVMYVMFLLLFIFAII) threads the bilayer. Residues 659–686 (GMQLFGMNYIDNMERFPDGDLPRWNFTD) are Extracellular-facing. Residue Asn-683 is glycosylated (N-linked (GlcNAc...) asparagine). The segment at residues 687–707 (FLHSFMIVFRALCGEWIESMW) is an intramembrane region (pore-forming). Glu-701 and Glu-704 together coordinate tetrodotoxin. Glu-704 is a saxitoxin binding site. The Extracellular segment spans residues 708-719 (DCMLVGDWSCIP). Cys-709 and Cys-717 are joined by a disulfide. Residues 720-740 (FFVAVFFVGNLVILNLLIALL) traverse the membrane as a helical segment. The Cytoplasmic portion of the chain corresponds to 741 to 857 (LNNYGSFCTS…VCFLLAKNKY (117 aa)). The helical transmembrane segment at 858–875 (FQKFVTAVLVITSVLLAL) threads the bilayer. Residues 876–888 (EDIYLPQRPVLVN) lie on the Extracellular side of the membrane. A helical membrane pass occupies residues 889 to 907 (ITLYVDYVLTAFFVIEMII). At 908 to 921 (MLFAVGFKKYFTSK) the chain is on the cytoplasmic side. A helical transmembrane segment spans residues 922–940 (WYWLDFIVVVAYLLNFVLM). Residues 941-945 (CAGIE) lie on the Extracellular side of the membrane. The helical transmembrane segment at 946-964 (ALQTLRLLRVFRLFRPLSK) threads the bilayer. The Cytoplasmic segment spans residues 965–981 (VNGMQVVTSTLVEAVPH). Residues 982 to 1001 (IFNVILVGIFFWLVFAIMGV) form a helical membrane-spanning segment. The Extracellular portion of the chain corresponds to 1002-1047 (QLFAGKFYKCVDENSTVLSHEITMDRNDCLHENYTWENSPMNFDHV). A disulfide bridge connects residues Cys-1011 and Cys-1030. A glycan (N-linked (GlcNAc...) asparagine) is linked at Asn-1015. Asn-1028 is a glycosylation site (N-linked (GlcNAc...) asparagine; atypical). Asn-1034 carries an N-linked (GlcNAc...) asparagine glycan. Residues 1048-1069 (GNAYLSLLQVATFKGWLQIMND) constitute an intramembrane region (pore-forming). Tetrodotoxin is bound at residue Gly-1062. Residue Trp-1063 coordinates saxitoxin. At 1070–1086 (AIDSREVHKQPIRETNI) the chain is on the extracellular side. The chain crosses the membrane as a helical span at residues 1087 to 1108 (YMYLYFIFFIVFGSFFILKLFV). The Cytoplasmic portion of the chain corresponds to 1109 to 1171 (CILIDIFRQQ…LMYDISVNRK (63 aa)). Residues 1133–1146 (QLIYRRAVMRTMSA) are linker region that may regulate channel inactivation. Residues 1172 to 1189 (FEYTMMILIILNVAVMAI) form a helical membrane-spanning segment. Over 1190–1200 (DHYGQSMEFSE) the chain is Extracellular. Residues 1201 to 1219 (VLDYLNLIFIIIFFVECVI) form a helical membrane-spanning segment. The Cytoplasmic portion of the chain corresponds to 1220–1231 (KVSGLRHHYFKD). A helical transmembrane segment spans residues 1232-1249 (PWNIIDFLYVVLAIAGLM). The Extracellular segment spans residues 1250–1262 (LSDVIEKYFISPT). Residues 1263–1279 (LLRILRILRVGRLLRYF) traverse the membrane as a helical segment. The Cytoplasmic portion of the chain corresponds to 1280 to 1298 (QSARGMRLLLLALRKALRT). Residues 1299 to 1316 (LFNVSFLLFVIMFVYAVF) form a helical membrane-spanning segment. Over 1317 to 1338 (GMEFFMHIRDAGAIDDVYNFKT) the chain is Extracellular. The segment at residues 1339–1361 (FGQSIILLFQLATSAGWDGVYFA) is an intramembrane region (pore-forming). 2 residues coordinate tetrodotoxin: Gly-1354 and Asp-1356. Asp-1356 lines the saxitoxin pocket. At 1362–1387 (IANEEDCRAPDHELGYPGNCGSRALG) the chain is on the extracellular side. A disulfide bond links Cys-1368 and Cys-1381. A helical membrane pass occupies residues 1388–1410 (IAYLVSYLIITCLVVINMYAAVI). Topologically, residues 1411–1553 (LDYVLEVYED…NAWRKHKQQN (143 aa)) are cytoplasmic.

Belongs to the sodium channel (TC 1.A.1.10) family. Detected in adult nerve cord, muscle, gut and mushroom-shaped accessory glands.

The protein resides in the cell membrane. Inhibited by the pore blockers saxitoxin and tetrodotoxin. Its function is as follows. Mediates the voltage-dependent sodium ion permeability of excitable membranes. The polypeptide is Sodium channel protein PaFPC1 (Periplaneta americana (American cockroach)).